Reading from the N-terminus, the 280-residue chain is Homeobox protein Hox-B1b (280 aa).

The tract at residues 46-65 is disordered; the sequence is GRLAAPTSAPHQSPGLPLHH. Residues 170–175 carry the Antp-type hexapeptide motif; sequence TFDWMK. Residues 195–254 constitute a DNA-binding region (homeobox); it reads HNVIRTNFTTKQLTELEKEFHFNKYLTRARRVEVAASLELNETQVKIWFQNRRMKQKKRE. Residues 249–280 are disordered; sequence KQKKREKLGGVLVHREKASGPESSPKAKESEP. Basic and acidic residues predominate over residues 261–280; that stretch reads VHREKASGPESSPKAKESEP.

Belongs to the Antp homeobox family. Labial subfamily.

It localises to the nucleus. Functionally, sequence-specific transcription factor which is part of a developmental regulatory system that provides cells with specific positional identities on the anterior-posterior axis. In Takifugu rubripes (Japanese pufferfish), this protein is Homeobox protein Hox-B1b (hoxb1b).